The chain runs to 501 residues: Glutamate--tRNA ligase (501 aa).

Positions 11–21 (PSPTGFLHIGN) match the 'HIGH' region motif. The 'KMSKS' region motif lies at 257 to 261 (KLSKR). Lys-260 is a binding site for ATP.

Belongs to the class-I aminoacyl-tRNA synthetase family. Glutamate--tRNA ligase type 1 subfamily. In terms of assembly, monomer.

It is found in the cytoplasm. It carries out the reaction tRNA(Glu) + L-glutamate + ATP = L-glutamyl-tRNA(Glu) + AMP + diphosphate. Catalyzes the attachment of glutamate to tRNA(Glu) in a two-step reaction: glutamate is first activated by ATP to form Glu-AMP and then transferred to the acceptor end of tRNA(Glu). This chain is Glutamate--tRNA ligase, found in Limosilactobacillus reuteri subsp. reuteri (strain JCM 1112) (Lactobacillus reuteri).